The following is a 293-amino-acid chain: Energy-coupling factor transporter ATP-binding protein EcfA2 (293 aa).

The ABC transporter domain maps to 3 to 246; the sequence is ITFQKVEHRY…ADELEKIGVD (244 aa). Position 40 to 47 (40 to 47) interacts with ATP; the sequence is GHTGSGKS.

Belongs to the ABC transporter superfamily. Energy-coupling factor EcfA family. Forms a stable energy-coupling factor (ECF) transporter complex composed of 2 membrane-embedded substrate-binding proteins (S component), 2 ATP-binding proteins (A component) and 2 transmembrane proteins (T component).

The protein localises to the cell membrane. ATP-binding (A) component of a common energy-coupling factor (ECF) ABC-transporter complex. Unlike classic ABC transporters this ECF transporter provides the energy necessary to transport a number of different substrates. This is Energy-coupling factor transporter ATP-binding protein EcfA2 from Bacillus cereus (strain ZK / E33L).